The following is a 368-amino-acid chain: Zinc finger protein 24 (368 aa).

A Glycyl lysine isopeptide (Lys-Gly) (interchain with G-Cter in SUMO2) cross-link involves residue Lys-22. Residue Lys-27 forms a Glycyl lysine isopeptide (Lys-Gly) (interchain with G-Cter in SUMO1); alternate linkage. Residue Lys-27 forms a Glycyl lysine isopeptide (Lys-Gly) (interchain with G-Cter in SUMO2); alternate linkage. In terms of domain architecture, SCAN box spans 52-134 (RQRFRQFGYQ…TVLEDLESEL (83 aa)). Ser-132 and Ser-142 each carry phosphoserine. Glycyl lysine isopeptide (Lys-Gly) (interchain with G-Cter in SUMO2) cross-links involve residues Lys-147, Lys-177, and Lys-236. The C2H2-type 1 zinc finger occupies 251-273 (HICDECGKHFSQGSALILHQRIH). A necessary and sufficient for nuclear localization region spans residues 251–301 (HICDECGKHFSQGSALILHQRIHSGEKPYGCVECGKAFSRSSILVQHQRVH). Ser-274 is modified (phosphoserine). Glycyl lysine isopeptide (Lys-Gly) (interchain with G-Cter in SUMO2) cross-links involve residues Lys-277 and Lys-286. 3 consecutive C2H2-type zinc fingers follow at residues 279 to 301 (YGCV…QRVH), 307 to 329 (YKCL…QRIH), and 335 to 357 (YECV…QRRH). The residue at position 292 (Ser-292) is a Phosphoserine. Tyr-335 bears the Phosphotyrosine mark. Residues Lys-361 and Lys-367 each participate in a glycyl lysine isopeptide (Lys-Gly) (interchain with G-Cter in SUMO2) cross-link.

Belongs to the krueppel C2H2-type zinc-finger protein family. Post-translationally, sumoylated. Expressed in many tissues except in heart.

It is found in the nucleus. In terms of biological role, transcription factor required for myelination of differentiated oligodendrocytes. Required for the conversion of oligodendrocytes from the premyelinating to the myelinating state. In the developing central nervous system (CNS), involved in the maintenance in the progenitor stage by promoting the cell cycle. Specifically binds to the 5'-TCAT-3' DNA sequence. Has transcription repressor activity in vitro. This is Zinc finger protein 24 (ZNF24) from Homo sapiens (Human).